The sequence spans 46 residues: Large ribosomal subunit protein bL36B (46 aa).

The protein belongs to the bacterial ribosomal protein bL36 family.

In Cronobacter sakazakii (strain ATCC BAA-894) (Enterobacter sakazakii), this protein is Large ribosomal subunit protein bL36B.